Consider the following 581-residue polypeptide: 4-hydroxy-3-methylbut-2-en-1-yl diphosphate synthase (flavodoxin) (581 aa).

The [4Fe-4S] cluster site is built by Cys-489, Cys-492, Cys-523, and Glu-530.

Belongs to the IspG family. The cofactor is [4Fe-4S] cluster.

The catalysed reaction is (2E)-4-hydroxy-3-methylbut-2-enyl diphosphate + oxidized [flavodoxin] + H2O + 2 H(+) = 2-C-methyl-D-erythritol 2,4-cyclic diphosphate + reduced [flavodoxin]. Its pathway is isoprenoid biosynthesis; isopentenyl diphosphate biosynthesis via DXP pathway; isopentenyl diphosphate from 1-deoxy-D-xylulose 5-phosphate: step 5/6. Converts 2C-methyl-D-erythritol 2,4-cyclodiphosphate (ME-2,4cPP) into 1-hydroxy-2-methyl-2-(E)-butenyl 4-diphosphate. In Porphyromonas gingivalis (strain ATCC BAA-308 / W83), this protein is 4-hydroxy-3-methylbut-2-en-1-yl diphosphate synthase (flavodoxin).